We begin with the raw amino-acid sequence, 581 residues long: Cytosolic Fe-S cluster assembly factor nar-1 (581 aa).

[4Fe-4S] cluster-binding residues include C20, C68, C71, C74, C215, C270, C457, and C461.

The protein belongs to the NARF family.

Its function is as follows. Component of the cytosolic Fe/S protein assembly machinery. Required for maturation of extramitochondrial Fe/S proteins. May play a role in the transfer of pre-assembled Fe/S clusters to target apoproteins. The polypeptide is Cytosolic Fe-S cluster assembly factor nar-1 (nar-1) (Neurospora crassa (strain ATCC 24698 / 74-OR23-1A / CBS 708.71 / DSM 1257 / FGSC 987)).